Reading from the N-terminus, the 715-residue chain is Polyribonucleotide nucleotidyltransferase (715 aa).

Residues D497 and D503 each contribute to the Mg(2+) site. A KH domain is found at 564–623 (PRLLTMKIDPEQIGLVIGPGGKTIKSITEQTGSKIDIADDGTVTIAAIQAKKAERARDLI). One can recognise an S1 motif domain in the interval 633 to 701 (GEVYLGRVTR…NKGRLNLTRL (69 aa)).

It belongs to the polyribonucleotide nucleotidyltransferase family. The cofactor is Mg(2+).

The protein resides in the cytoplasm. It carries out the reaction RNA(n+1) + phosphate = RNA(n) + a ribonucleoside 5'-diphosphate. Involved in mRNA degradation. Catalyzes the phosphorolysis of single-stranded polyribonucleotides processively in the 3'- to 5'-direction. The polypeptide is Polyribonucleotide nucleotidyltransferase (Crocosphaera subtropica (strain ATCC 51142 / BH68) (Cyanothece sp. (strain ATCC 51142))).